We begin with the raw amino-acid sequence, 69 residues long: Large ribosomal subunit protein uL29 (69 aa).

The protein belongs to the universal ribosomal protein uL29 family.

The polypeptide is Large ribosomal subunit protein uL29 (Synechococcus sp. (strain CC9902)).